The following is a 499-amino-acid chain: Apolipoprotein N-acyltransferase (499 aa).

6 helical membrane-spanning segments follow: residues 9-29 (LLLG…PALL), 50-70 (LGYI…SIGV), 77-97 (FWWA…FFVS), 114-134 (FIFC…FTGL), 148-168 (ILIQ…VIYI), and 183-203 (LKVL…YGSV). The 245-residue stretch at 220–464 (VQPSIPQTEK…DGLIPKKLDS (245 aa)) folds into the CN hydrolase domain. Glu259 functions as the Proton acceptor in the catalytic mechanism. Lys322 is an active-site residue. Cys372 (nucleophile) is an active-site residue. A helical transmembrane segment spans residues 466–486 (TIFSKFGNITILLIVFFIFLV).

This sequence belongs to the CN hydrolase family. Apolipoprotein N-acyltransferase subfamily.

Its subcellular location is the cell inner membrane. The enzyme catalyses N-terminal S-1,2-diacyl-sn-glyceryl-L-cysteinyl-[lipoprotein] + a glycerophospholipid = N-acyl-S-1,2-diacyl-sn-glyceryl-L-cysteinyl-[lipoprotein] + a 2-acyl-sn-glycero-3-phospholipid + H(+). Its pathway is protein modification; lipoprotein biosynthesis (N-acyl transfer). Catalyzes the phospholipid dependent N-acylation of the N-terminal cysteine of apolipoprotein, the last step in lipoprotein maturation. This is Apolipoprotein N-acyltransferase from Rickettsia bellii (strain RML369-C).